The sequence spans 356 residues: Peptide chain release factor 1 (356 aa).

Position 235 is an N5-methylglutamine (Gln-235).

Belongs to the prokaryotic/mitochondrial release factor family. Methylated by PrmC. Methylation increases the termination efficiency of RF1.

It localises to the cytoplasm. In terms of biological role, peptide chain release factor 1 directs the termination of translation in response to the peptide chain termination codons UAG and UAA. The polypeptide is Peptide chain release factor 1 (Hydrogenobaculum sp. (strain Y04AAS1)).